The chain runs to 537 residues: O-phosphoserine--tRNA(Cys) ligase (537 aa).

Residues 186–188, 231–233, 273–274, and Asn317 each bind substrate; these read HMT, SAS, and YY.

It belongs to the class-II aminoacyl-tRNA synthetase family. O-phosphoseryl-tRNA(Cys) synthetase subfamily. Homotetramer. Interacts with SepCysS.

The enzyme catalyses tRNA(Cys) + O-phospho-L-serine + ATP = O-phospho-L-seryl-tRNA(Cys) + AMP + diphosphate. In terms of biological role, catalyzes the attachment of O-phosphoserine (Sep) to tRNA(Cys). In Methanococcus maripaludis (strain C5 / ATCC BAA-1333), this protein is O-phosphoserine--tRNA(Cys) ligase.